A 175-amino-acid polypeptide reads, in one-letter code: Ribosome maturation factor RimM (175 aa).

Residues 99 to 172 (SIEFTWEHFI…KLTMIIPDGL (74 aa)) enclose the PRC barrel domain.

Belongs to the RimM family. Binds ribosomal protein uS19.

It is found in the cytoplasm. Its function is as follows. An accessory protein needed during the final step in the assembly of 30S ribosomal subunit, possibly for assembly of the head region. Essential for efficient processing of 16S rRNA. May be needed both before and after RbfA during the maturation of 16S rRNA. It has affinity for free ribosomal 30S subunits but not for 70S ribosomes. This chain is Ribosome maturation factor RimM, found in Porphyromonas gingivalis (strain ATCC BAA-308 / W83).